The primary structure comprises 122 residues: Small ribosomal subunit protein uS13 (122 aa).

The segment at 99-122 (RGQRTHTNARTRKGPAKAIAGKKK) is disordered.

This sequence belongs to the universal ribosomal protein uS13 family. In terms of assembly, part of the 30S ribosomal subunit. Forms a loose heterodimer with protein S19. Forms two bridges to the 50S subunit in the 70S ribosome.

Its function is as follows. Located at the top of the head of the 30S subunit, it contacts several helices of the 16S rRNA. In the 70S ribosome it contacts the 23S rRNA (bridge B1a) and protein L5 of the 50S subunit (bridge B1b), connecting the 2 subunits; these bridges are implicated in subunit movement. Contacts the tRNAs in the A and P-sites. This Bradyrhizobium sp. (strain ORS 278) protein is Small ribosomal subunit protein uS13.